The sequence spans 377 residues: D-alanine--D-alanine ligase (377 aa).

In terms of domain architecture, ATP-grasp spans 140-349 (KELLTVNGIR…NAKLVDMLID (210 aa)). ATP is bound at residue 170–225 (VAELGNIVFVKAANQGSSVGISRVTNAEEYTEALSDSFQYDYKVLIEEAVNGAREL). Mg(2+) contacts are provided by Asp303, Glu316, and Asn318.

This sequence belongs to the D-alanine--D-alanine ligase family. The cofactor is Mg(2+). It depends on Mn(2+) as a cofactor.

The protein localises to the cytoplasm. It catalyses the reaction 2 D-alanine + ATP = D-alanyl-D-alanine + ADP + phosphate + H(+). Its pathway is cell wall biogenesis; peptidoglycan biosynthesis. In terms of biological role, cell wall formation. This chain is D-alanine--D-alanine ligase, found in Leuconostoc mesenteroides.